The following is a 456-amino-acid chain: Bifunctional protein GlmU (456 aa).

Residues 1-229 (MLNNAMSVVI…LSEVEGVNNR (229 aa)) form a pyrophosphorylase region. Residues 11-14 (LAAG), lysine 25, glutamine 76, 81-82 (GT), 103-105 (YGD), glycine 140, glutamate 154, asparagine 169, and asparagine 227 each bind UDP-N-acetyl-alpha-D-glucosamine. A Mg(2+)-binding site is contributed by aspartate 105. Asparagine 227 is a Mg(2+) binding site. Residues 230–250 (LQLSRLERVYQSEQAEKLLLA) are linker. The interval 251–456 (GVMLRDPARF…EGWRRPVKKK (206 aa)) is N-acetyltransferase. UDP-N-acetyl-alpha-D-glucosamine contacts are provided by arginine 333 and lysine 351. Residue histidine 363 is the Proton acceptor of the active site. UDP-N-acetyl-alpha-D-glucosamine is bound by residues tyrosine 366 and asparagine 377. Residues alanine 380, 386-387 (NY), serine 405, alanine 423, and arginine 440 each bind acetyl-CoA.

In the N-terminal section; belongs to the N-acetylglucosamine-1-phosphate uridyltransferase family. It in the C-terminal section; belongs to the transferase hexapeptide repeat family. Homotrimer. Requires Mg(2+) as cofactor.

The protein localises to the cytoplasm. It carries out the reaction alpha-D-glucosamine 1-phosphate + acetyl-CoA = N-acetyl-alpha-D-glucosamine 1-phosphate + CoA + H(+). It catalyses the reaction N-acetyl-alpha-D-glucosamine 1-phosphate + UTP + H(+) = UDP-N-acetyl-alpha-D-glucosamine + diphosphate. Its pathway is nucleotide-sugar biosynthesis; UDP-N-acetyl-alpha-D-glucosamine biosynthesis; N-acetyl-alpha-D-glucosamine 1-phosphate from alpha-D-glucosamine 6-phosphate (route II): step 2/2. It participates in nucleotide-sugar biosynthesis; UDP-N-acetyl-alpha-D-glucosamine biosynthesis; UDP-N-acetyl-alpha-D-glucosamine from N-acetyl-alpha-D-glucosamine 1-phosphate: step 1/1. The protein operates within bacterial outer membrane biogenesis; LPS lipid A biosynthesis. Its function is as follows. Catalyzes the last two sequential reactions in the de novo biosynthetic pathway for UDP-N-acetylglucosamine (UDP-GlcNAc). The C-terminal domain catalyzes the transfer of acetyl group from acetyl coenzyme A to glucosamine-1-phosphate (GlcN-1-P) to produce N-acetylglucosamine-1-phosphate (GlcNAc-1-P), which is converted into UDP-GlcNAc by the transfer of uridine 5-monophosphate (from uridine 5-triphosphate), a reaction catalyzed by the N-terminal domain. The protein is Bifunctional protein GlmU of Shigella flexneri serotype 5b (strain 8401).